The following is a 171-amino-acid chain: 3-hydroxydecanoyl-[acyl-carrier-protein] dehydratase (171 aa).

H70 is an active-site residue.

It belongs to the thioester dehydratase family. FabA subfamily. Homodimer.

The protein localises to the cytoplasm. The enzyme catalyses a (3R)-hydroxyacyl-[ACP] = a (2E)-enoyl-[ACP] + H2O. It catalyses the reaction (3R)-hydroxydecanoyl-[ACP] = (2E)-decenoyl-[ACP] + H2O. The catalysed reaction is (2E)-decenoyl-[ACP] = (3Z)-decenoyl-[ACP]. It functions in the pathway lipid metabolism; fatty acid biosynthesis. Its function is as follows. Necessary for the introduction of cis unsaturation into fatty acids. Catalyzes the dehydration of (3R)-3-hydroxydecanoyl-ACP to E-(2)-decenoyl-ACP and then its isomerization to Z-(3)-decenoyl-ACP. Can catalyze the dehydratase reaction for beta-hydroxyacyl-ACPs with saturated chain lengths up to 16:0, being most active on intermediate chain length. This chain is 3-hydroxydecanoyl-[acyl-carrier-protein] dehydratase, found in Methylococcus capsulatus (strain ATCC 33009 / NCIMB 11132 / Bath).